The primary structure comprises 431 residues: Tol-Pal system protein TolB (431 aa).

The signal sequence occupies residues 1–26; it reads MSLMTKLGFRALVASCLITAGSAANA. Residues 411 to 431 form a disordered region; that stretch reads PQILSVQGGSVREPSWGPFMQ.

The protein belongs to the TolB family. In terms of assembly, the Tol-Pal system is composed of five core proteins: the inner membrane proteins TolA, TolQ and TolR, the periplasmic protein TolB and the outer membrane protein Pal. They form a network linking the inner and outer membranes and the peptidoglycan layer.

Its subcellular location is the periplasm. Functionally, part of the Tol-Pal system, which plays a role in outer membrane invagination during cell division and is important for maintaining outer membrane integrity. This is Tol-Pal system protein TolB from Burkholderia lata (strain ATCC 17760 / DSM 23089 / LMG 22485 / NCIMB 9086 / R18194 / 383).